A 32-amino-acid polypeptide reads, in one-letter code: Small ribosomal subunit protein uS19 (32 aa).

It belongs to the universal ribosomal protein uS19 family.

In terms of biological role, protein S19 forms a complex with S13 that binds strongly to the 16S ribosomal RNA. The protein is Small ribosomal subunit protein uS19 (rpsS) of Yersinia enterocolitica.